A 617-amino-acid polypeptide reads, in one-letter code: Ceramide transfer protein (617 aa).

The span at Met1–Gly11 shows a compositional bias: polar residues. Residues Met1 to Pro23 are disordered. The PH domain maps to Pro23–Ser117. A coiled-coil region spans residues Arg268 to His302. The short motif at Glu320–Glu326 is the FFAT element. The interval Glu341–Ser382 is disordered. The START domain maps to Asp383–Ala611. Positions 466, 487, 524, and 572 each coordinate an N-acylsphing-4-enine.

It is found in the cytoplasm. The protein resides in the golgi apparatus. The protein localises to the endoplasmic reticulum. It catalyses the reaction N-hexadecanoylsphing-4-enine(in) = N-hexadecanoylsphing-4-enine(out). Functionally, may mediate the intracellular trafficking of ceramide in a non-vesicular manner. This chain is Ceramide transfer protein (cert1), found in Xenopus laevis (African clawed frog).